Here is a 256-residue protein sequence, read N- to C-terminus: Deoxyribose-phosphate aldolase (256 aa).

The active-site Proton donor/acceptor is the Asp-102. Lys-165 serves as the catalytic Schiff-base intermediate with acetaldehyde. The Proton donor/acceptor role is filled by Lys-197.

It belongs to the DeoC/FbaB aldolase family. DeoC type 2 subfamily.

The protein resides in the cytoplasm. The catalysed reaction is 2-deoxy-D-ribose 5-phosphate = D-glyceraldehyde 3-phosphate + acetaldehyde. Its pathway is carbohydrate degradation; 2-deoxy-D-ribose 1-phosphate degradation; D-glyceraldehyde 3-phosphate and acetaldehyde from 2-deoxy-alpha-D-ribose 1-phosphate: step 2/2. Catalyzes a reversible aldol reaction between acetaldehyde and D-glyceraldehyde 3-phosphate to generate 2-deoxy-D-ribose 5-phosphate. The sequence is that of Deoxyribose-phosphate aldolase from Shewanella sp. (strain ANA-3).